Here is a 1052-residue protein sequence, read N- to C-terminus: Malignant fibrous histiocytoma-amplified sequence 1 (1052 aa).

A2 is modified (N-acetylalanine). LRR repeat units follow at residues 64–85, 88–109, 112–133, 136–157, 159–180, 182–203, 205–226, 228–249, 251–272, 274–296, 297–318, 320–341, and 343–364; these read DIEA…LGSA, SLRV…VAEL, HLTE…VVSA, ELRK…LGAL, HLEE…LSCL, RLRT…LLQL, ALEE…ISAL, ALKI…FCEL, SLES…FSCL, RLKM…LPLA, GLEE…ISGL, RLLT…IVEL, and GLEE…FGQL. Positions 64–364 are required for interaction with PJA2; sequence DIEALNLGNN…AVLPDHFGQL (301 aa). Positions 64 to 649 are required for interaction with PPP2R2A; it reads DIEALNLGNN…DKLLSVAEHR (586 aa). The 247-residue stretch at 403–649 folds into the Roc domain; sequence QPAVQPRLKL…DKLLSVAEHR (247 aa). At K601 the chain carries N6-acetyllysine.

Interacts with RAF1. Interacts with HSPD1. Interacts with PPP2CA; retains PPP2CA into the cytoplasm and excludes it from the nucleus. Interacts with PPP2R2A; the interaction is direct. Interacts with PJA2. In terms of processing, ubiquitinated. Ubiquitination by PJA2 does not lead MFHAS1 to proteasomal degradation but positively regulates its function in polarization of macrophages. As to expression, ubiquitously expressed. Overexpressed in malignant fibrous histiocytomas. Expressed in red blood cells (at protein level).

It is found in the cytoplasm. In terms of biological role, probable GTP-binding protein. Functions in innate immunity and more specifically the inflammatory response as a regulator of the Toll-like receptor TLR2 and TLR4 signaling pathways. Negatively regulates the part of the TLR4 signaling pathway that leads to the activation of the transcription factor AP-1. By retaining the phosphatase complex PP2A into the cytoplasm, prevents the dephosphorylation of the AP-1 subunit JUN which is required for proper activation of the transcription factor. Both inhibits and activates the TLR2-dependent signaling pathway. Positively regulates the TLR2 signaling pathway to activate specifically the downstream p38 and JNK MAP kinases and promote the polarization of macrophages toward the pro-inflammatory M1 phenotype. It may also play a role in the regulation of inflammation induced by high glucose through the PKB/AKT signaling pathway. Also involved in erythrocyte differentiation through activation of the ERK1/ERK2 signaling pathway. The chain is Malignant fibrous histiocytoma-amplified sequence 1 from Homo sapiens (Human).